Here is a 251-residue protein sequence, read N- to C-terminus: Gamma-glutamyl peptidase 5 (251 aa).

A Glutamine amidotransferase type-1 domain is found at 17–214 (STFVKKAYGG…IDRVVNLKLM (198 aa)). Residue Cys101 is the Nucleophile of the active site. Catalysis depends on residues His193 and Glu195.

The protein belongs to the peptidase C26 family.

The protein localises to the cytoplasm. It localises to the cytosol. It functions in the pathway secondary metabolite biosynthesis. Its function is as follows. Involved in glucosinolate biosynthesis. Hydrolyzes the gamma-glutamyl peptide bond of several glutathione (GSH) conjugates to produce Cys-Gly conjugates related to glucosinolates. The gamma-Glu-Cys-Gly-GSH conjugates are the sulfur-donating molecule in glucosinolate biosynthesis. The protein is Gamma-glutamyl peptidase 5 of Arabidopsis thaliana (Mouse-ear cress).